The following is a 340-amino-acid chain: Ribonucleoside-diphosphate reductase small subunit (340 aa).

Residues 180-200 (FILMILIEGIFFAASFAAIAY) form a helical membrane-spanning segment.

Belongs to the ribonucleoside diphosphate reductase small chain family. As to quaternary structure, heterotetramer composed of a homodimer of the large subunit (R1) and a homodimer of the small subunit (R2). Larger multisubunit protein complex are also active, composed of (R1)n(R2)n. It depends on Fe cation as a cofactor.

The protein localises to the host membrane. It catalyses the reaction a 2'-deoxyribonucleoside 5'-diphosphate + [thioredoxin]-disulfide + H2O = a ribonucleoside 5'-diphosphate + [thioredoxin]-dithiol. Functionally, ribonucleoside-diphosphate reductase holoenzyme provides the precursors necessary for viral DNA synthesis. Allows virus growth in non-dividing cells, as well as reactivation from latency in infected hosts. Catalyzes the biosynthesis of deoxyribonucleotides from the corresponding ribonucleotides. The protein is Ribonucleoside-diphosphate reductase small subunit of Human herpesvirus 1 (strain 17) (HHV-1).